We begin with the raw amino-acid sequence, 166 residues long: Small ribosomal subunit protein uS5 (166 aa).

The region spanning 11-74 (LQEKLVQVNR…DQARRNMVKV (64 aa)) is the S5 DRBM domain.

Belongs to the universal ribosomal protein uS5 family. Part of the 30S ribosomal subunit. Contacts proteins S4 and S8.

With S4 and S12 plays an important role in translational accuracy. Functionally, located at the back of the 30S subunit body where it stabilizes the conformation of the head with respect to the body. The protein is Small ribosomal subunit protein uS5 of Chromohalobacter salexigens (strain ATCC BAA-138 / DSM 3043 / CIP 106854 / NCIMB 13768 / 1H11).